The primary structure comprises 638 residues: Growth hormone receptor (638 aa).

The first 18 residues, M1–A18, serve as a signal peptide directing secretion. Topologically, residues F19–Y264 are extracellular. N46 is a glycosylation site (N-linked (GlcNAc...) asparagine). 2 cysteine pairs are disulfide-bonded: C56–C66 and C101–C112. N-linked (GlcNAc...) asparagine glycosylation occurs at N115. An intrachain disulfide couples C126 to C140. The 104-residue stretch at P151–M254 folds into the Fibronectin type-III domain. Residues N156, N161, and N200 are each glycosylated (N-linked (GlcNAc...) asparagine). Residues Y240–S244 carry the WSXWS motif motif. The tract at residues E260–D262 is required for ADAM17-mediated proteolysis. Residues F265 to S288 form a helical membrane-spanning segment. Residues K289–P638 are Cytoplasmic-facing. Residues K294–V379 are required for JAK2 binding. Positions I297–K305 match the Box 1 motif motif. The UbE motif motif lies at D340–D349. Position 341 is a phosphoserine (S341). The segment at P353–E391 is disordered. The span at T362 to S384 shows a compositional bias: basic and acidic residues. A phosphotyrosine; by JAK2 mark is found at Y487 and Y595.

Belongs to the type I cytokine receptor family. Type 1 subfamily. On growth hormone (GH) binding, forms homodimers and binds JAK2 via a box 1-containing domain. Post-translationally, the soluble form (GHBP) is produced by phorbol ester-promoted proteolytic cleavage at the cell surface (shedding) by ADAM17/TACE. Shedding is inhibited by growth hormone (GH) binding to the receptor probably due to a conformational change in GHR rendering the receptor inaccessible to ADAM17. On GH binding, phosphorylated on tyrosine residues in the cytoplasmic domain by JAK2. In terms of processing, ubiquitinated by the ECS(SOCS2) complex following ligand-binding and phosphorylation by JAK2, leading to its degradation by the proteasome. Regulation by the ECS(SOCS2) complex acts as a negative feedback loop of growth hormone receptor signaling. Ubiquitination is not sufficient for GHR internalization. As to expression, expressed in various tissues with high expression in liver and skeletal muscle. Isoform 2 is expressed in lung, stomach and muscle. In terms of tissue distribution, predominantly expressed in kidney, bladder, adrenal gland and brain stem. Highly expressed in placental villi.

Its subcellular location is the cell membrane. It localises to the secreted. Functionally, receptor for pituitary gland growth hormone (GH1) involved in regulating postnatal body growth. On ligand binding, couples to the JAK2/STAT5 pathway. Its function is as follows. The soluble form (GHBP) acts as a reservoir of growth hormone in plasma and may be a modulator/inhibitor of GH signaling. In terms of biological role, up-regulates the production of the soluble Growth hormone-binding protein form (GHBP) and acts as a negative inhibitor of growth hormone signaling. The sequence is that of Growth hormone receptor (GHR) from Homo sapiens (Human).